Here is a 114-residue protein sequence, read N- to C-terminus: Transmembrane protein 14C (114 aa).

4 consecutive transmembrane segments (helical) span residues 8-28 (LMPL…GGII), 33-53 (AGSV…GLGA), 63-83 (VWVF…RFYN), and 89-109 (PAGL…ISLL).

Belongs to the TMEM14 family.

It is found in the mitochondrion membrane. Its function is as follows. Required for normal heme biosynthesis. The sequence is that of Transmembrane protein 14C (Tmem14c) from Mus musculus (Mouse).